The following is a 308-amino-acid chain: Ribosomal RNA small subunit methyltransferase H (308 aa).

S-adenosyl-L-methionine is bound by residues glycine 34–histidine 36, aspartate 54, phenylalanine 80, aspartate 101, and glutamine 108.

Belongs to the methyltransferase superfamily. RsmH family.

The protein resides in the cytoplasm. It carries out the reaction cytidine(1402) in 16S rRNA + S-adenosyl-L-methionine = N(4)-methylcytidine(1402) in 16S rRNA + S-adenosyl-L-homocysteine + H(+). Specifically methylates the N4 position of cytidine in position 1402 (C1402) of 16S rRNA. This is Ribosomal RNA small subunit methyltransferase H from Ureaplasma urealyticum serovar 10 (strain ATCC 33699 / Western).